The sequence spans 134 residues: MLSPKRTKFRKQHRGRMKGVSYRGNRICFGRFALQALEPAWITSGQIEAGRRTITRYARRGGKIWVRIFPDKPITMRPAETRMGSGKGSPEYWVSVIKPGRILYEMGGVSETVARAAARIAAYKMPIRTQFVTT.

The protein belongs to the universal ribosomal protein uL16 family. Part of the 50S ribosomal subunit.

The protein resides in the plastid. It localises to the chloroplast. This chain is Large ribosomal subunit protein uL16c, found in Pinus koraiensis (Korean pine).